Consider the following 206-residue polypeptide: MSGPGTAAVALLPAVLLALLAPWAGRGGAAAPTAPNGTLEAELERRWESLVALSLARLPVAAQPKEAAVQSGAGDYLLGIKRLRRLYCNVGIGFHLQALPDGRIGGAHADTRDSLLELSPVERGVVSIFGVASRFFVAMSSKGKLYGSPFFTDECTFKEILLPNNYNAYESYKYPGMFIALSKNGKTKKGNRVSPTMKVTHFLPRL.

Positions 1–30 (MSGPGTAAVALLPAVLLALLAPWAGRGGAA) are cleaved as a signal peptide.

The protein belongs to the heparin-binding growth factors family. In terms of assembly, interacts with FGFR1, FGFR2, FGFR3 and FGFR4. Affinity between fibroblast growth factors (FGFs) and their receptors is increased by heparan sulfate glycosaminoglycans that function as coreceptors.

It localises to the secreted. Its function is as follows. Plays an important role in the regulation of embryonic development, cell proliferation, and cell differentiation. Required for normal limb and cardiac valve development during embryogenesis. May play a role in embryonic molar tooth bud development via inducing the expression of MSX1, MSX2 and MSX1-mediated expression of SDC1 in dental mesenchyme cells. The sequence is that of Fibroblast growth factor 4 from Homo sapiens (Human).